The sequence spans 86 residues: Putative defensin-like protein 234 (86 aa).

The first 26 residues, 1–26, serve as a signal peptide directing secretion; the sequence is MRSATLLLVSCVLLSFILGNVKEVEA. 4 disulfide bridges follow: Cys-34–Cys-86, Cys-44–Cys-71, Cys-52–Cys-80, and Cys-69–Cys-82.

It belongs to the DEFL family.

The protein localises to the secreted. The protein is Putative defensin-like protein 234 (SCRL14) of Arabidopsis thaliana (Mouse-ear cress).